Reading from the N-terminus, the 190-residue chain is Elongation factor P-like protein (190 aa).

It belongs to the elongation factor P family.

The chain is Elongation factor P-like protein from Edwardsiella ictaluri (strain 93-146).